We begin with the raw amino-acid sequence, 298 residues long: Acetylglutamate kinase (298 aa).

Substrate contacts are provided by residues 69 to 70, Arg-91, and Asn-191; that span reads GG.

Belongs to the acetylglutamate kinase family. ArgB subfamily.

The protein localises to the cytoplasm. The catalysed reaction is N-acetyl-L-glutamate + ATP = N-acetyl-L-glutamyl 5-phosphate + ADP. It functions in the pathway amino-acid biosynthesis; L-arginine biosynthesis; N(2)-acetyl-L-ornithine from L-glutamate: step 2/4. Its function is as follows. Catalyzes the ATP-dependent phosphorylation of N-acetyl-L-glutamate. This Neisseria meningitidis serogroup A / serotype 4A (strain DSM 15465 / Z2491) protein is Acetylglutamate kinase.